Here is a 902-residue protein sequence, read N- to C-terminus: Cytosolic 10-formyltetrahydrofolate dehydrogenase (902 aa).

Residues 1–310 (MKIAVIGQSL…LASNFFKGAA (310 aa)) form a hydrolase domain region. Serine 9 carries the post-translational modification Phosphoserine. Lysine 38 carries the N6-succinyllysine modification. 88 to 90 (QFI) lines the (6R)-10-formyltetrahydrofolate pocket. Residue histidine 106 is the Proton donor of the active site. Position 142 (aspartate 142) interacts with (6R)-10-formyltetrahydrofolate. In terms of domain architecture, Carrier spans 318 to 395 (EAELVTAEAV…DFIQLLVRKL (78 aa)). Position 354 is an O-(pantetheine 4'-phosphoryl)serine (serine 354). Residues 417–902 (TIRIPHQLFI…LRVKTVTFEY (486 aa)) form an aldehyde dehydrogenase domain region. NADP(+)-binding positions include 571 to 573 (IPW) and 597 to 600 (KPAQ). 2 positions are modified to phosphoserine: serine 629 and serine 631. NADP(+) is bound by residues 630 to 635 (GSLVGQ) and 650 to 651 (GS). An N6-succinyllysine modification is found at lysine 660. The active-site Proton acceptor is glutamate 673. 673 to 674 (EL) lines the NADP(+) pocket. Cysteine 707 (proton donor) is an active-site residue. Lysine 757 lines the NADP(+) pocket. Residue lysine 767 is modified to N6-succinyllysine. 804-806 (ESF) contacts NADP(+). Serine 825 is modified (phosphoserine). Position 882 is an N6-acetyllysine (lysine 882).

It in the N-terminal section; belongs to the GART family. The protein in the C-terminal section; belongs to the aldehyde dehydrogenase family. ALDH1L subfamily. In terms of assembly, homotetramer. In terms of processing, phosphopantetheinylation at Ser-354 by AASDHPPT is required for the formyltetrahydrofolate dehydrogenase activity.

The protein localises to the cytoplasm. It localises to the cytosol. It catalyses the reaction (6R)-10-formyltetrahydrofolate + NADP(+) + H2O = (6S)-5,6,7,8-tetrahydrofolate + CO2 + NADPH + H(+). Functionally, cytosolic 10-formyltetrahydrofolate dehydrogenase that catalyzes the NADP(+)-dependent conversion of 10-formyltetrahydrofolate to tetrahydrofolate and carbon dioxide. May also have an NADP(+)-dependent aldehyde dehydrogenase activity towards formaldehyde, acetaldehyde, propionaldehyde, and benzaldehyde. The sequence is that of Cytosolic 10-formyltetrahydrofolate dehydrogenase from Pongo abelii (Sumatran orangutan).